The primary structure comprises 686 residues: ATP-dependent zinc metalloprotease FtsH 1 (686 aa).

Residues 1–33 (MCFCIVSSPEAMHSNADSPSSGPGLQPVWTTLR) are Cytoplasmic-facing. Residues 34–54 (SPYVFWIGGAILLALLVHLGI) form a helical membrane-spanning segment. Residues 55-164 (KWQQASAPVR…TFAATQESDW (110 aa)) are Periplasmic-facing. Residues 165–185 (VGTLLLWGLPLGLIVGIWLFF) form a helical membrane-spanning segment. Residues 186-686 (MRRMATGGRE…AEGASPSSQG (501 aa)) lie on the Cytoplasmic side of the membrane. 257–264 (GPPGTGKT) provides a ligand contact to ATP. H479 lines the Zn(2+) pocket. E480 is an active-site residue. Zn(2+) is bound by residues H483 and D555. The segment at 661–686 (YAWLKEGDGTSRNSASAEGASPSSQG) is disordered. Residues 670-686 (TSRNSASAEGASPSSQG) show a composition bias toward polar residues.

In the central section; belongs to the AAA ATPase family. This sequence in the C-terminal section; belongs to the peptidase M41 family. In terms of assembly, homohexamer. It depends on Zn(2+) as a cofactor.

The protein localises to the cell inner membrane. In terms of biological role, acts as a processive, ATP-dependent zinc metallopeptidase for both cytoplasmic and membrane proteins. Plays a role in the quality control of integral membrane proteins. The chain is ATP-dependent zinc metalloprotease FtsH 1 from Salinibacter ruber (strain M8).